Consider the following 129-residue polypeptide: Histone H2A-IV (129 aa).

This sequence belongs to the histone H2A family. In terms of assembly, the nucleosome is a histone octamer containing two molecules each of H2A, H2B, H3 and H4 assembled in one H3-H4 heterotetramer and two H2A-H2B heterodimers. The octamer wraps approximately 147 bp of DNA.

Its subcellular location is the nucleus. The protein localises to the chromosome. Its function is as follows. Core component of nucleosome. Nucleosomes wrap and compact DNA into chromatin, limiting DNA accessibility to the cellular machineries which require DNA as a template. Histones thereby play a central role in transcription regulation, DNA repair, DNA replication and chromosomal stability. DNA accessibility is regulated via a complex set of post-translational modifications of histones, also called histone code, and nucleosome remodeling. The protein is Histone H2A-IV of Volvox carteri (Green alga).